Consider the following 475-residue polypeptide: Flotillin-like protein 4 (475 aa).

2 coiled-coil regions span residues 235-255 and 305-325; these read ENQR…KKAA and QYET…KEAE.

It belongs to the band 7/mec-2 family. Flotillin subfamily. Expressed in roots and nodules. Primarily expressed in vascular tissues. Upon induction of nodulation, expansion of expression in the root cortex in the region of elongating root hairs, which will eventually become colonized by bacteria. Expressed in the infection zone in nodules.

It is found in the membrane. Its subcellular location is the caveola. It localises to the cell membrane. Its function is as follows. May act as a scaffolding protein within caveolar membranes, functionally participating in formation of caveolae or caveolae-like vesicles. Required for normal infection threads initiation and elongation and nodulation. Probably involved in polar growth of the infection thread. In Medicago truncatula (Barrel medic), this protein is Flotillin-like protein 4 (FLOT4).